The primary structure comprises 233 residues: Large ribosomal subunit protein uL1 (233 aa).

Belongs to the universal ribosomal protein uL1 family. As to quaternary structure, part of the 50S ribosomal subunit.

Binds directly to 23S rRNA. The L1 stalk is quite mobile in the ribosome, and is involved in E site tRNA release. Its function is as follows. Protein L1 is also a translational repressor protein, it controls the translation of the L11 operon by binding to its mRNA. The protein is Large ribosomal subunit protein uL1 of Geobacillus sp. (strain WCH70).